The chain runs to 271 residues: Dirigent protein 17 (271 aa).

A compositionally biased stretch (polar residues) spans M1–Q12. The interval M1 to P22 is disordered. N-linked (GlcNAc...) asparagine glycosylation is present at N255.

Belongs to the plant dirigent protein family. As to quaternary structure, homodimer.

The protein resides in the secreted. It localises to the extracellular space. Its subcellular location is the apoplast. In terms of biological role, dirigent proteins impart stereoselectivity on the phenoxy radical-coupling reaction, yielding optically active lignans from two molecules of coniferyl alcohol in the biosynthesis of lignans, flavonolignans, and alkaloids and thus plays a central role in plant secondary metabolism. The chain is Dirigent protein 17 (DIR17) from Arabidopsis thaliana (Mouse-ear cress).